Here is a 129-residue protein sequence, read N- to C-terminus: Gem-associated protein 7 (129 aa).

N-acetylmethionine is present on M1. Residues 1–31 (MQSPLTIPVPVPVLRLPRGPDGFSRGFASDG) enclose the SUZ-C domain. A Sm domain is found at 63 to 129 (RYLRSLLAMV…SDIISYSFKL (67 aa)).

It belongs to the gemin-7 family. Part of the core SMN complex that contains SMN1, GEMIN2/SIP1, DDX20/GEMIN3, GEMIN4, GEMIN5, GEMIN6, GEMIN7, GEMIN8 and STRAP/UNRIP. Part of the SMN-Sm complex that contains SMN1, GEMIN2/SIP1, DDX20/GEMIN3, GEMIN4, GEMIN5, GEMIN6, GEMIN7, GEMIN8, STRAP/UNRIP and the Sm proteins SNRPB, SNRPD1, SNRPD2, SNRPD3, SNRPE, SNRPF and SNRPG. Interacts with GEMIN6; the interaction is direct. Interacts with STRAP/UNRIP; the interaction is direct. Interacts with GEMIN8; the interaction is direct. Interacts with SNRPB, SNRPD2, SNRPD3 and SNRPE; the interaction is direct.

It localises to the nucleus. Its subcellular location is the nucleoplasm. The protein localises to the gem. The protein resides in the cytoplasm. The SMN complex catalyzes the assembly of small nuclear ribonucleoproteins (snRNPs), the building blocks of the spliceosome, and thereby plays an important role in the splicing of cellular pre-mRNAs. Most spliceosomal snRNPs contain a common set of Sm proteins SNRPB, SNRPD1, SNRPD2, SNRPD3, SNRPE, SNRPF and SNRPG that assemble in a heptameric protein ring on the Sm site of the small nuclear RNA to form the core snRNP (Sm core). In the cytosol, the Sm proteins SNRPD1, SNRPD2, SNRPE, SNRPF and SNRPG are trapped in an inactive 6S pICln-Sm complex by the chaperone CLNS1A that controls the assembly of the core snRNP. To assemble core snRNPs, the SMN complex accepts the trapped 5Sm proteins from CLNS1A forming an intermediate. Binding of snRNA inside 5Sm triggers eviction of the SMN complex, thereby allowing binding of SNRPD3 and SNRPB to complete assembly of the core snRNP. This is Gem-associated protein 7 (Gemin7) from Mus musculus (Mouse).